Reading from the N-terminus, the 185-residue chain is CASP-like protein SELMODRAFT_413556 (185 aa).

The Cytoplasmic portion of the chain corresponds to 1–89; sequence MATLPLSLIF…AVTVLFYLAK (89 aa). A helical membrane pass occupies residues 90 to 110; that stretch reads LVFGILGLALSIIWLLHIIVF. The Extracellular portion of the chain corresponds to 111–131; the sequence is MLVNPPAFPFLNQVFIQLDSA. A helical membrane pass occupies residues 132 to 152; that stretch reads WGLLGTTAFAIFCYYLIMSVI. The Cytoplasmic portion of the chain corresponds to 153–163; it reads SGEMHSIHPMK. A helical transmembrane segment spans residues 164 to 184; sequence YQGTLMNSFLFNVAIILLCST. Residue R185 is a topological domain, extracellular.

It belongs to the Casparian strip membrane proteins (CASP) family. In terms of assembly, homodimer and heterodimers.

The protein resides in the cell membrane. The protein is CASP-like protein SELMODRAFT_413556 of Selaginella moellendorffii (Spikemoss).